The chain runs to 261 residues: MLHIADTTLTSRLLTGTGKFATPELMLAALEASGSQLVTMAMKRVDLNGGNDAILAPLRQLGIKLLPNTSGAKTADEAIFAARLAREALGTHWLKLEIHPDVKYLLPDPIETLKAAEQLVKEGFTVLPYCGADPVLCKRLEEVGCAAVMPLGAPIGSNQGLQTRDFLRIIIEQARVPVIVDAGIGAPSQAADALEMGADAVLVNTAIAVARDPVAMARAFRLAVEAGGLARQAGLGSKQFVASATSPLTGFLHQQAEGAVR.

The Schiff-base intermediate with DXP role is filled by Lys95. 1-deoxy-D-xylulose 5-phosphate contacts are provided by residues Gly156, 182–183 (AG), and 204–205 (NT).

It belongs to the ThiG family. In terms of assembly, homotetramer. Forms heterodimers with either ThiH or ThiS.

The protein resides in the cytoplasm. The enzyme catalyses [ThiS sulfur-carrier protein]-C-terminal-Gly-aminoethanethioate + 2-iminoacetate + 1-deoxy-D-xylulose 5-phosphate = [ThiS sulfur-carrier protein]-C-terminal Gly-Gly + 2-[(2R,5Z)-2-carboxy-4-methylthiazol-5(2H)-ylidene]ethyl phosphate + 2 H2O + H(+). The protein operates within cofactor biosynthesis; thiamine diphosphate biosynthesis. In terms of biological role, catalyzes the rearrangement of 1-deoxy-D-xylulose 5-phosphate (DXP) to produce the thiazole phosphate moiety of thiamine. Sulfur is provided by the thiocarboxylate moiety of the carrier protein ThiS. In vitro, sulfur can be provided by H(2)S. The sequence is that of Thiazole synthase from Pectobacterium carotovorum subsp. carotovorum (strain PC1).